The primary structure comprises 335 residues: MNTEATHDQNEALTTGARLRNAREQLGLSQQAVAERLCLKVSTVRDIEEDKAPADLASTFLRGYIRSYARLVHIPEEELLPGLEKQAPLRAAKVAPMQSFSLGKRRKKRDGWLMTFTWLVLFVVIGLSGAWWWQDHKAQQEEITTMADQSSAELNNNQSQSVPLDTSTTTDQAMATTPTSPVDTTATNTQTPAVTAPAPAVDPQQNAVVPPSQANVDTAATPAPAATTTPDSAAPLPTDQAGVTTPAVDPNALVMNFTADCWLEVTDATGKKLFSGMQRKDGNLNLTGQAPYKLKIGAPAAVQIQYQGKPVDLSRFIRTNQVARLTLNAEQSPAQ.

Over 1–111 (MNTEATHDQN…LGKRRKKRDG (111 aa)) the chain is Cytoplasmic. The HTH cro/C1-type domain maps to 19 to 71 (LRNAREQLGLSQQAVAERLCLKVSTVRDIEEDKAPADLASTFLRGYIRSYARL). Residues 30–49 (QQAVAERLCLKVSTVRDIEE) constitute a DNA-binding region (H-T-H motif). A helical; Signal-anchor for type II membrane protein transmembrane segment spans residues 112-132 (WLMTFTWLVLFVVIGLSGAWW). Residues 133–335 (WQDHKAQQEE…TLNAEQSPAQ (203 aa)) lie on the Periplasmic side of the membrane. A compositionally biased stretch (polar residues) spans 148–164 (DQSSAELNNNQSQSVPL). The tract at residues 148 to 244 (DQSSAELNNN…PLPTDQAGVT (97 aa)) is disordered. Low complexity-rich tracts occupy residues 165–205 (DTST…DPQQ) and 217–239 (DTAA…LPTD).

Belongs to the RodZ family.

Its subcellular location is the cell inner membrane. Cytoskeletal protein that is involved in cell-shape control through regulation of the length of the long axis. The chain is Cytoskeleton protein RodZ from Escherichia coli O81 (strain ED1a).